The sequence spans 168 residues: ATP synthase subunit b (168 aa).

Residues 9 to 29 (AIPFGTIAYTLFIFLLLLVML) form a helical membrane-spanning segment.

This sequence belongs to the ATPase B chain family. F-type ATPases have 2 components, F(1) - the catalytic core - and F(0) - the membrane proton channel. F(1) has five subunits: alpha(3), beta(3), gamma(1), delta(1), epsilon(1). F(0) has three main subunits: a(1), b(2) and c(10-14). The alpha and beta chains form an alternating ring which encloses part of the gamma chain. F(1) is attached to F(0) by a central stalk formed by the gamma and epsilon chains, while a peripheral stalk is formed by the delta and b chains.

The protein resides in the cell membrane. Its function is as follows. F(1)F(0) ATP synthase produces ATP from ADP in the presence of a proton or sodium gradient. F-type ATPases consist of two structural domains, F(1) containing the extramembraneous catalytic core and F(0) containing the membrane proton channel, linked together by a central stalk and a peripheral stalk. During catalysis, ATP synthesis in the catalytic domain of F(1) is coupled via a rotary mechanism of the central stalk subunits to proton translocation. In terms of biological role, component of the F(0) channel, it forms part of the peripheral stalk, linking F(1) to F(0). In Bacillus thuringiensis (strain Al Hakam), this protein is ATP synthase subunit b.